Here is a 629-residue protein sequence, read N- to C-terminus: tRNA uridine 5-carboxymethylaminomethyl modification enzyme MnmG (629 aa).

FAD is bound by residues 18–23 (GGGHAG), Val130, and Ser188. 280-294 (GPRYCPSIEDKVVRF) is a binding site for NAD(+). Gln377 serves as a coordination point for FAD.

Belongs to the MnmG family. As to quaternary structure, homodimer. Heterotetramer of two MnmE and two MnmG subunits. FAD serves as cofactor.

The protein localises to the cytoplasm. NAD-binding protein involved in the addition of a carboxymethylaminomethyl (cmnm) group at the wobble position (U34) of certain tRNAs, forming tRNA-cmnm(5)s(2)U34. This Granulibacter bethesdensis (strain ATCC BAA-1260 / CGDNIH1) protein is tRNA uridine 5-carboxymethylaminomethyl modification enzyme MnmG.